The sequence spans 337 residues: GTP 3',8-cyclase (337 aa).

A Radical SAM core domain is found at 18–242 (NFGRRFHYLR…DKADILDGPA (225 aa)). Residue Arg-27 participates in GTP binding. [4Fe-4S] cluster is bound by residues Cys-34 and Cys-38. Residue Tyr-40 participates in S-adenosyl-L-methionine binding. Position 41 (Cys-41) interacts with [4Fe-4S] cluster. Residue Arg-76 coordinates GTP. Gly-80 lines the S-adenosyl-L-methionine pocket. Thr-107 is a GTP binding site. Ser-131 is an S-adenosyl-L-methionine binding site. Residue Lys-168 coordinates GTP. Met-202 contributes to the S-adenosyl-L-methionine binding site. [4Fe-4S] cluster contacts are provided by Cys-265 and Cys-268. Residue 270 to 272 (RLR) coordinates GTP. Cys-282 contacts [4Fe-4S] cluster.

Belongs to the radical SAM superfamily. MoaA family. In terms of assembly, monomer and homodimer. The cofactor is [4Fe-4S] cluster.

It carries out the reaction GTP + AH2 + S-adenosyl-L-methionine = (8S)-3',8-cyclo-7,8-dihydroguanosine 5'-triphosphate + 5'-deoxyadenosine + L-methionine + A + H(+). The protein operates within cofactor biosynthesis; molybdopterin biosynthesis. Catalyzes the cyclization of GTP to (8S)-3',8-cyclo-7,8-dihydroguanosine 5'-triphosphate. This chain is GTP 3',8-cyclase, found in Shewanella denitrificans (strain OS217 / ATCC BAA-1090 / DSM 15013).